The primary structure comprises 907 residues: Protein translocase subunit SecA (907 aa).

ATP-binding positions include Gln87, Gly105–Thr109, and Asp511. Residues Cys891, Cys893, Cys902, and His903 each contribute to the Zn(2+) site.

Belongs to the SecA family. As to quaternary structure, monomer and homodimer. Part of the essential Sec protein translocation apparatus which comprises SecA, SecYEG and auxiliary proteins SecDF-YajC and YidC. Requires Zn(2+) as cofactor.

The protein localises to the cell inner membrane. It is found in the cytoplasm. It carries out the reaction ATP + H2O + cellular proteinSide 1 = ADP + phosphate + cellular proteinSide 2.. Its function is as follows. Part of the Sec protein translocase complex. Interacts with the SecYEG preprotein conducting channel. Has a central role in coupling the hydrolysis of ATP to the transfer of proteins into and across the cell membrane, serving both as a receptor for the preprotein-SecB complex and as an ATP-driven molecular motor driving the stepwise translocation of polypeptide chains across the membrane. This is Protein translocase subunit SecA from Aromatoleum aromaticum (strain DSM 19018 / LMG 30748 / EbN1) (Azoarcus sp. (strain EbN1)).